The primary structure comprises 221 residues: Zingipain-1 (221 aa).

3 disulfide bridges follow: C24-C65, C58-C98, and C155-C206. The active site involves C27. Residues N95 and N156 are each glycosylated (N-linked (GlcNAc...) asparagine). Residues H161 and N181 contribute to the active site.

This sequence belongs to the peptidase C1 family.

It carries out the reaction Preferential cleavage of peptides with a proline residue at the P2 position.. Functionally, cysteine proteinase with a high level of diversity in substrate specificity, an amino acid bearing a proline residue at the P2 position is preferred. The sequence is that of Zingipain-1 from Zingiber officinale (Ginger).